The chain runs to 612 residues: Protein MUK1 (612 aa).

Residues 40–50 (EDQNDNERSSC) show a composition bias toward basic and acidic residues. The disordered stretch occupies residues 40-66 (EDQNDNERSSCDGDENSTTGERLENNK). The span at 55–66 (NSTTGERLENNK) shows a compositional bias: polar residues. Residues serine 67, serine 163, serine 185, and serine 245 each carry the phosphoserine modification. Residues 273-414 (TEYNKLLNEK…VEGLTKNDFS (142 aa)) form the VPS9 domain. Residues 494–560 (IRSYTPPHPN…SSASLEHGNR (67 aa)) form a disordered region. A compositionally biased stretch (low complexity) spans 503–517 (NNTSNNNLHSSNNLN). Over residues 518 to 529 (IPRSSSQLSMEL) the composition is skewed to polar residues. Residues 530–542 (SNRDTTEMSRDGS) show a composition bias toward basic and acidic residues. Residues 543 to 554 (RSTSSSSRSSAS) show a composition bias toward low complexity.

The protein resides in the cytoplasm. In terms of biological role, putative GTPase-activating protein. The chain is Protein MUK1 (MUK1) from Saccharomyces cerevisiae (strain ATCC 204508 / S288c) (Baker's yeast).